Consider the following 219-residue polypeptide: Imidazole glycerol phosphate synthase subunit HisH (219 aa).

One can recognise a Glutamine amidotransferase type-1 domain in the interval Lys-2–Gly-218. Cys-87 serves as the catalytic Nucleophile. Active-site residues include His-193 and Glu-195.

In terms of assembly, heterodimer of HisH and HisF.

It is found in the cytoplasm. It carries out the reaction 5-[(5-phospho-1-deoxy-D-ribulos-1-ylimino)methylamino]-1-(5-phospho-beta-D-ribosyl)imidazole-4-carboxamide + L-glutamine = D-erythro-1-(imidazol-4-yl)glycerol 3-phosphate + 5-amino-1-(5-phospho-beta-D-ribosyl)imidazole-4-carboxamide + L-glutamate + H(+). It catalyses the reaction L-glutamine + H2O = L-glutamate + NH4(+). It participates in amino-acid biosynthesis; L-histidine biosynthesis; L-histidine from 5-phospho-alpha-D-ribose 1-diphosphate: step 5/9. IGPS catalyzes the conversion of PRFAR and glutamine to IGP, AICAR and glutamate. The HisH subunit catalyzes the hydrolysis of glutamine to glutamate and ammonia as part of the synthesis of IGP and AICAR. The resulting ammonia molecule is channeled to the active site of HisF. The protein is Imidazole glycerol phosphate synthase subunit HisH of Granulibacter bethesdensis (strain ATCC BAA-1260 / CGDNIH1).